The primary structure comprises 281 residues: Ribonuclease HII (281 aa).

The segment at 1 to 46 (MIRDTKQPIKVPAKPASRSGGKAKTVKPKTIKPKTSAKAAAAKPAS) is disordered. A compositionally biased stretch (low complexity) spans 33–46 (PKTSAKAAAAKPAS). Residues 73 to 261 (WPIAGCDEAG…VAAAWQKIEG (189 aa)) form the RNase H type-2 domain. A divalent metal cation contacts are provided by Asp-79, Glu-80, and Asp-170.

It belongs to the RNase HII family. It depends on Mn(2+) as a cofactor. Mg(2+) is required as a cofactor.

The protein resides in the cytoplasm. The catalysed reaction is Endonucleolytic cleavage to 5'-phosphomonoester.. In terms of biological role, endonuclease that specifically degrades the RNA of RNA-DNA hybrids. This Rhodopseudomonas palustris (strain TIE-1) protein is Ribonuclease HII.